The primary structure comprises 453 residues: UPF0210 protein Mbar_A3181 (453 aa).

This sequence belongs to the UPF0210 family.

The sequence is that of UPF0210 protein Mbar_A3181 from Methanosarcina barkeri (strain Fusaro / DSM 804).